The sequence spans 125 residues: Small ribosomal subunit protein uS11 (125 aa).

Belongs to the universal ribosomal protein uS11 family. In terms of assembly, part of the 30S ribosomal subunit. Interacts with proteins S7 and S18. Binds to IF-3.

Functionally, located on the platform of the 30S subunit, it bridges several disparate RNA helices of the 16S rRNA. Forms part of the Shine-Dalgarno cleft in the 70S ribosome. The sequence is that of Small ribosomal subunit protein uS11 from Aquifex aeolicus (strain VF5).